Consider the following 447-residue polypeptide: N-succinylarginine dihydrolase (447 aa).

Residues 19-28, asparagine 110, and 137-138 each bind substrate; these read AGLSVGNKAS and HR. Glutamate 174 is an active-site residue. Arginine 213 provides a ligand contact to substrate. Residue histidine 249 is part of the active site. Residues aspartate 251 and asparagine 365 each coordinate substrate. Cysteine 371 serves as the catalytic Nucleophile.

Belongs to the succinylarginine dihydrolase family. In terms of assembly, homodimer.

It catalyses the reaction N(2)-succinyl-L-arginine + 2 H2O + 2 H(+) = N(2)-succinyl-L-ornithine + 2 NH4(+) + CO2. Its pathway is amino-acid degradation; L-arginine degradation via AST pathway; L-glutamate and succinate from L-arginine: step 2/5. Functionally, catalyzes the hydrolysis of N(2)-succinylarginine into N(2)-succinylornithine, ammonia and CO(2). In Photorhabdus laumondii subsp. laumondii (strain DSM 15139 / CIP 105565 / TT01) (Photorhabdus luminescens subsp. laumondii), this protein is N-succinylarginine dihydrolase.